A 424-amino-acid chain; its full sequence is 3-isopropylmalate dehydratase large subunit 1 (424 aa).

3 residues coordinate [4Fe-4S] cluster: cysteine 303, cysteine 363, and cysteine 366.

It belongs to the aconitase/IPM isomerase family. LeuC type 2 subfamily. In terms of assembly, heterodimer of LeuC and LeuD. Requires [4Fe-4S] cluster as cofactor.

It carries out the reaction (2R,3S)-3-isopropylmalate = (2S)-2-isopropylmalate. It participates in amino-acid biosynthesis; L-leucine biosynthesis; L-leucine from 3-methyl-2-oxobutanoate: step 2/4. In terms of biological role, catalyzes the isomerization between 2-isopropylmalate and 3-isopropylmalate, via the formation of 2-isopropylmaleate. This is 3-isopropylmalate dehydratase large subunit 1 from Pyrococcus furiosus (strain ATCC 43587 / DSM 3638 / JCM 8422 / Vc1).